Here is a 383-residue protein sequence, read N- to C-terminus: Homeobox protein SHOOT MERISTEMLESS (383 aa).

The tract at residues 37–58 (HQQHHGHDQQHQHQQQHDGYAY) is disordered. An ELK domain is found at 263–283 (ELKGQLLRKYSGYLGSLKQEF). A DNA-binding region (homeobox; TALE-type) is located at residues 284–347 (MKKRKKGKLP…NQRKRHWKPS (64 aa)).

Belongs to the TALE/KNOX homeobox family.

The protein resides in the nucleus. Its function is as follows. Required for shoot apical meristem formation during embryogenesis. Probably binds to the DNA sequence 5'-TGAC-3'. The polypeptide is Homeobox protein SHOOT MERISTEMLESS (STM) (Brassica oleracea (Wild cabbage)).